A 56-amino-acid chain; its full sequence is Large ribosomal subunit protein bL32 (56 aa).

Residues 1-34 (MAVQQNKPTRSKRGMRRSHDALTTSTVSVDKASG) form a disordered region.

Belongs to the bacterial ribosomal protein bL32 family.

The protein is Large ribosomal subunit protein bL32 of Sodalis glossinidius (strain morsitans).